Here is a 348-residue protein sequence, read N- to C-terminus: Probable dual-specificity RNA methyltransferase RlmN (348 aa).

The active-site Proton acceptor is Glu95. Residues 101 to 335 (SGNRLTICVS…VSLRASRGLD (235 aa)) enclose the Radical SAM core domain. A disulfide bridge links Cys108 with Cys340. Residues Cys115, Cys119, and Cys122 each coordinate [4Fe-4S] cluster. Residues 162-163 (GE), Ser192, 221-223 (SLH), and Asn297 contribute to the S-adenosyl-L-methionine site. Residue Cys340 is the S-methylcysteine intermediate of the active site.

It belongs to the radical SAM superfamily. RlmN family. [4Fe-4S] cluster serves as cofactor.

It localises to the cytoplasm. The catalysed reaction is adenosine(2503) in 23S rRNA + 2 reduced [2Fe-2S]-[ferredoxin] + 2 S-adenosyl-L-methionine = 2-methyladenosine(2503) in 23S rRNA + 5'-deoxyadenosine + L-methionine + 2 oxidized [2Fe-2S]-[ferredoxin] + S-adenosyl-L-homocysteine. It catalyses the reaction adenosine(37) in tRNA + 2 reduced [2Fe-2S]-[ferredoxin] + 2 S-adenosyl-L-methionine = 2-methyladenosine(37) in tRNA + 5'-deoxyadenosine + L-methionine + 2 oxidized [2Fe-2S]-[ferredoxin] + S-adenosyl-L-homocysteine. Functionally, specifically methylates position 2 of adenine 2503 in 23S rRNA and position 2 of adenine 37 in tRNAs. This chain is Probable dual-specificity RNA methyltransferase RlmN, found in Prochlorococcus marinus (strain SARG / CCMP1375 / SS120).